The chain runs to 88 residues: Small ribosomal subunit protein bS20 (88 aa).

This sequence belongs to the bacterial ribosomal protein bS20 family. Part of the 30S ribosomal subunit.

In terms of biological role, binds directly to 16S ribosomal RNA. This chain is Small ribosomal subunit protein bS20 (rpsT), found in Bacillus subtilis (strain 168).